Here is a 144-residue protein sequence, read N- to C-terminus: MLMPKRVKHRKVQRGRMKGRATRGNFLAYGDFGLQATTCGWITSNQIEAARIAINRYIKRGGKLWIKIFPDKPVTEKPAETRMGSGKGSPEYWVAVVKPDRVVFELSGVTEDVAREAMRLASHKLPVRTKFVTRRDFEEMGGEK.

Belongs to the universal ribosomal protein uL16 family. Part of the 50S ribosomal subunit.

Its function is as follows. Binds 23S rRNA and is also seen to make contacts with the A and possibly P site tRNAs. This chain is Large ribosomal subunit protein uL16, found in Clostridium botulinum (strain Alaska E43 / Type E3).